A 231-amino-acid polypeptide reads, in one-letter code: Orotate phosphoribosyltransferase (231 aa).

5-phospho-alpha-D-ribose 1-diphosphate-binding positions include Lys-27, 79-80, Arg-106, Lys-107, Lys-110, His-112, and 133-141; these read YK and DDVMTAGTA. Orotate contacts are provided by Thr-137 and Arg-166.

The protein belongs to the purine/pyrimidine phosphoribosyltransferase family. PyrE subfamily. In terms of assembly, homodimer. Requires Mg(2+) as cofactor.

It carries out the reaction orotidine 5'-phosphate + diphosphate = orotate + 5-phospho-alpha-D-ribose 1-diphosphate. It participates in pyrimidine metabolism; UMP biosynthesis via de novo pathway; UMP from orotate: step 1/2. Its function is as follows. Catalyzes the transfer of a ribosyl phosphate group from 5-phosphoribose 1-diphosphate to orotate, leading to the formation of orotidine monophosphate (OMP). The chain is Orotate phosphoribosyltransferase from Bifidobacterium longum (strain NCC 2705).